A 249-amino-acid chain; its full sequence is Sugar fermentation stimulation protein homolog (249 aa).

This sequence belongs to the SfsA family.

The polypeptide is Sugar fermentation stimulation protein homolog (Synechococcus sp. (strain CC9902)).